The primary structure comprises 510 residues: Flagellin A (510 aa).

It belongs to the bacterial flagellin family. Heteromer of FlaA and FlaB. FlaB is located proximal to the hook while the remainder of the filament is composed of the predominant FlaA.

The protein resides in the secreted. It localises to the bacterial flagellum. Flagellin is the subunit protein which polymerizes to form the filaments of bacterial flagella. Important for motility and virulence. This chain is Flagellin A (flaA), found in Helicobacter pylori (strain ATCC 700392 / 26695) (Campylobacter pylori).